The following is a 394-amino-acid chain: 8-amino-7-oxononanoate synthase (394 aa).

R21 serves as a coordination point for substrate. G112–Y113 contributes to the pyridoxal 5'-phosphate binding site. H137 provides a ligand contact to substrate. S183, H211, and T239 together coordinate pyridoxal 5'-phosphate. The residue at position 242 (K242) is an N6-(pyridoxal phosphate)lysine. A substrate-binding site is contributed by T358.

The protein belongs to the class-II pyridoxal-phosphate-dependent aminotransferase family. BioF subfamily. Homodimer. Pyridoxal 5'-phosphate serves as cofactor.

It carries out the reaction 6-carboxyhexanoyl-[ACP] + L-alanine + H(+) = (8S)-8-amino-7-oxononanoate + holo-[ACP] + CO2. Its pathway is cofactor biosynthesis; biotin biosynthesis. Its function is as follows. Catalyzes the decarboxylative condensation of pimeloyl-[acyl-carrier protein] and L-alanine to produce 8-amino-7-oxononanoate (AON), [acyl-carrier protein], and carbon dioxide. The protein is 8-amino-7-oxononanoate synthase of Burkholderia thailandensis (strain ATCC 700388 / DSM 13276 / CCUG 48851 / CIP 106301 / E264).